We begin with the raw amino-acid sequence, 54 residues long: 2-aminomuconate deaminase (54 aa).

Homohexamer.

It catalyses the reaction (2Z,4E)-2-aminomuconate + H2O = (3E)-2-oxohex-3-enedioate + NH4(+). The protein operates within xenobiotic degradation; nitrobenzene degradation. Functionally, converts 2-aminomuconate to 4-oxalocrotonate, an intermediate step in the biodegradation of nitrobenzene. In Ectopseudomonas oleovorans (Pseudomonas oleovorans), this protein is 2-aminomuconate deaminase.